The sequence spans 230 residues: 5'-methylthioadenosine/S-adenosylhomocysteine nucleosidase (230 aa).

The active-site Proton acceptor is the Glu12. Residues Gly78, Ile153, and 174 to 175 (ME) contribute to the substrate site. The active-site Proton donor is Asp198.

The protein belongs to the PNP/UDP phosphorylase family. MtnN subfamily.

The catalysed reaction is S-adenosyl-L-homocysteine + H2O = S-(5-deoxy-D-ribos-5-yl)-L-homocysteine + adenine. The enzyme catalyses S-methyl-5'-thioadenosine + H2O = 5-(methylsulfanyl)-D-ribose + adenine. It carries out the reaction 5'-deoxyadenosine + H2O = 5-deoxy-D-ribose + adenine. It functions in the pathway amino-acid biosynthesis; L-methionine biosynthesis via salvage pathway; S-methyl-5-thio-alpha-D-ribose 1-phosphate from S-methyl-5'-thioadenosine (hydrolase route): step 1/2. Functionally, catalyzes the irreversible cleavage of the glycosidic bond in both 5'-methylthioadenosine (MTA) and S-adenosylhomocysteine (SAH/AdoHcy) to adenine and the corresponding thioribose, 5'-methylthioribose and S-ribosylhomocysteine, respectively. Also cleaves 5'-deoxyadenosine, a toxic by-product of radical S-adenosylmethionine (SAM) enzymes, into 5-deoxyribose and adenine. This chain is 5'-methylthioadenosine/S-adenosylhomocysteine nucleosidase, found in Shewanella loihica (strain ATCC BAA-1088 / PV-4).